Here is a 291-residue protein sequence, read N- to C-terminus: tRNA-cytidine(32) 2-sulfurtransferase (291 aa).

The short motif at 36–41 (SGGKDS) is the PP-loop motif element. Residues Cys-111, Cys-114, and Cys-202 each coordinate [4Fe-4S] cluster. Residues 259–291 (DPWLDAEDEEAEDCGEPSAGDGVVSLGGARGGR) form a disordered region. Acidic residues predominate over residues 262-273 (LDAEDEEAEDCG).

It belongs to the TtcA family. In terms of assembly, homodimer. Mg(2+) is required as a cofactor. Requires [4Fe-4S] cluster as cofactor.

Its subcellular location is the cytoplasm. It carries out the reaction cytidine(32) in tRNA + S-sulfanyl-L-cysteinyl-[cysteine desulfurase] + AH2 + ATP = 2-thiocytidine(32) in tRNA + L-cysteinyl-[cysteine desulfurase] + A + AMP + diphosphate + H(+). It participates in tRNA modification. Functionally, catalyzes the ATP-dependent 2-thiolation of cytidine in position 32 of tRNA, to form 2-thiocytidine (s(2)C32). The sulfur atoms are provided by the cysteine/cysteine desulfurase (IscS) system. This chain is tRNA-cytidine(32) 2-sulfurtransferase, found in Anaeromyxobacter sp. (strain K).